The chain runs to 175 residues: ADP-ribosylation factor 6 (175 aa).

Gly2 is lipidated: N-myristoyl glycine. Residues Gly20 to Thr27, Asp63 to Gln67, and Asn122 to Asp125 each bind GTP.

It belongs to the small GTPase superfamily. Arf family. Expressed in the head (at protein level).

The protein resides in the golgi apparatus. With respect to regulation, activation is generally mediated by a guanine exchange factor (GEF), while inactivation through hydrolysis of bound GTP is catalyzed by a GTPase activating protein (GAP). May be activated by Efa6. Functionally, GTP-binding protein involved in protein trafficking; may modulate vesicle budding and uncoating within the Golgi apparatus. Promotes cell movement and remodeling of the actin cytoskeleton during compound eye morphogenesis. Required for normal ethanol-induced tolerance and preference. Probably after Efa6-mediated activation, counteracts ethanol-induced sedation. This is ADP-ribosylation factor 6 from Drosophila melanogaster (Fruit fly).